We begin with the raw amino-acid sequence, 113 residues long: Dolichyl-diphosphooligosaccharide--protein glycosyltransferase subunit DAD1 (113 aa).

Ser2 is modified (N-acetylserine). The Cytoplasmic segment spans residues 2–30 (SASVLSVISRFLEEYLSSTPQRLKLLDAY). The helical transmembrane segment at 31 to 51 (LLYILLTGALQFGYCLLVGTF) threads the bilayer. Pro52 is a topological domain (lumenal). Residues 53–73 (FNSFLSGFISCVGSFILAVCL) form a helical membrane-spanning segment. Residues 74 to 92 (RIQINPQNKADFQGISPER) are Cytoplasmic-facing. The helical transmembrane segment at 93–113 (AFADFLFASTILHLVVMNFVG) threads the bilayer.

This sequence belongs to the DAD/OST2 family. In terms of assembly, component of the oligosaccharyltransferase (OST) complex. OST exists in two different complex forms which contain common core subunits RPN1, RPN2, OST48, OST4, DAD1 and TMEM258, either STT3A or STT3B as catalytic subunits, and form-specific accessory subunits. STT3A complex assembly occurs through the formation of 3 subcomplexes. Subcomplex 1 contains RPN1 and TMEM258, subcomplex 2 contains the STT3A-specific subunits STT3A, DC2/OSTC, and KCP2 as well as the core subunit OST4, and subcomplex 3 contains RPN2, DAD1, and OST48. The STT3A complex can form stable complexes with the Sec61 complex or with both the Sec61 and TRAP complexes.

The protein localises to the endoplasmic reticulum membrane. The protein operates within protein modification; protein glycosylation. Subunit of the oligosaccharyl transferase (OST) complex that catalyzes the initial transfer of a defined glycan (Glc(3)Man(9)GlcNAc(2) in eukaryotes) from the lipid carrier dolichol-pyrophosphate to an asparagine residue within an Asn-X-Ser/Thr consensus motif in nascent polypeptide chains, the first step in protein N-glycosylation. N-glycosylation occurs cotranslationally and the complex associates with the Sec61 complex at the channel-forming translocon complex that mediates protein translocation across the endoplasmic reticulum (ER). All subunits are required for a maximal enzyme activity. The chain is Dolichyl-diphosphooligosaccharide--protein glycosyltransferase subunit DAD1 from Sus scrofa (Pig).